Here is a 593-residue protein sequence, read N- to C-terminus: Salivary alpha-glucosidase (593 aa).

Positions Met1–Gly19 are cleaved as a signal peptide. Ca(2+)-binding residues include Asp49, Asp51, Asp53, Ile55, Asp57, and Asn130. N-linked (GlcNAc...) asparagine glycans are attached at residues Asn130 and Asn163. Asp201, Tyr235, Leu236, and Glu238 together coordinate Ca(2+). N-linked (GlcNAc...) asparagine glycosylation is found at Asn295, Asn310, Asn338, Asn414, Asn445, and Asn453. N-acetyl-beta-D-glucosamine is bound at residue Asn338.

Belongs to the glycosyl hydrolase 13 family. Saliva (at protein level). Proximal lateral lobes of the salivary gland (at protein level).

The protein localises to the secreted. The catalysed reaction is Hydrolysis of terminal, non-reducing (1-&gt;4)-linked alpha-D-glucose residues with release of alpha-D-glucose.. In terms of biological role, functions as a glucosidase that shows high activity toward sucrose, a major component of nectar. Assists the mosquito in its sugar-feeding capabilities. The polypeptide is Salivary alpha-glucosidase (Anopheles gambiae (African malaria mosquito)).